The following is a 139-amino-acid chain: Centromere protein S (139 aa).

The segment at 99–139 is disordered; that stretch reads ELASSNMEQKEKKKKKSSAAKGRKTEENETPVTESEDSNMA. The span at 110-120 shows a compositional bias: basic residues; sequence KKKKKSSAAKG.

The protein belongs to the TAF9 family. CENP-S/MHF1 subfamily. Heterodimer with CENPX, sometimes called MHF; this interaction stabilizes both partners. MHF heterodimers can assemble to form tetrameric structures. MHF also coassemble with CENPT-CENPW heterodimers at centromeres to form the tetrameric CENP-T-W-S-X complex. Forms a discrete complex with FANCM and CENPX, called FANCM-MHF; this interaction, probably mediated by direct binding between CENPS and FANCM, leads to synergistic activation of double-stranded DNA binding and strongly stimulates FANCM-mediated DNA remodeling. Recruited by FANCM to the Fanconi anemia (FA) core complex, which consists of CENPS, CENPX, FANCA, FANCB, FANCC, FANCE, FANCF, FANCG, FANCL, FANCM, FAAP24 and FAAP100. The FA core complex associates with Bloom syndrome (BLM) complex, which consists of at least BLM, DNA topoisomerase 3-alpha (TOP3A), RMI1/BLAP75, RPA1/RPA70 and RPA2/RPA32. The super complex between FA and BLM is called BRAFT. Component of the CENPA-CAD complex, composed of CENPI, CENPK, CENPL, CENPO, CENPP, CENPQ, CENPR and CENPS. The CENPA-CAD complex is probably recruited on centromeres by the CENPA-NAC complex, at least composed of CENPA, CENPC, CENPH, CENPM, CENPN, CENPT and CENPU.

It is found in the nucleus. The protein localises to the chromosome. Its subcellular location is the centromere. It localises to the kinetochore. DNA-binding component of the Fanconi anemia (FA) core complex. Required for the normal activation of the FA pathway, leading to monoubiquitination of the FANCI-FANCD2 complex in response to DNA damage, cellular resistance to DNA cross-linking drugs, and prevention of chromosomal breakage. In complex with CENPX (MHF heterodimer), crucial cofactor for FANCM in both binding and ATP-dependent remodeling of DNA. Stabilizes FANCM. In complex with CENPX and FANCM (but not other FANC proteins), rapidly recruited to blocked forks and promotes gene conversion at blocked replication forks. In complex with CENPT, CENPW and CENPX (CENP-T-W-S-X heterotetramer), involved in the formation of a functional kinetochore outer plate, which is essential for kinetochore-microtubule attachment and faithful mitotic progression. As a component of MHF and CENP-T-W-S-X complexes, binds DNA and bends it to form a nucleosome-like structure. DNA-binding function is fulfilled in the presence of CENPX, with the following preference for DNA substates: Holliday junction &gt; double-stranded &gt; splay arm &gt; single-stranded. Does not bind DNA on its own. In Gallus gallus (Chicken), this protein is Centromere protein S (CENPS).